Consider the following 468-residue polypeptide: UDP-N-acetylmuramate--L-alanine ligase (468 aa).

Gly107–Thr113 contributes to the ATP binding site.

The protein belongs to the MurCDEF family.

The protein resides in the cytoplasm. It carries out the reaction UDP-N-acetyl-alpha-D-muramate + L-alanine + ATP = UDP-N-acetyl-alpha-D-muramoyl-L-alanine + ADP + phosphate + H(+). It participates in cell wall biogenesis; peptidoglycan biosynthesis. Functionally, cell wall formation. The protein is UDP-N-acetylmuramate--L-alanine ligase of Roseiflexus sp. (strain RS-1).